A 789-amino-acid chain; its full sequence is Ribosomal protein S6 kinase alpha-5 (789 aa).

One can recognise a Protein kinase 1 domain in the interval 39 to 308 (FELLKVLGTG…ADEIKQHPFF (270 aa)). ATP-binding positions include 45–53 (LGTGAYGKV) and lysine 71. Aspartate 167 functions as the Proton acceptor in the catalytic mechanism. Position 202 is a phosphoserine; by autocatalysis (serine 202). The AGC-kinase C-terminal domain occupies 309 to 377 (QNINWDDLAA…VAPSILFKRN (69 aa)). Phosphoserine is present on serine 350. Serine 366 and serine 371 each carry phosphoserine; by autocatalysis. Residues 416-677 (DLKEKPLGEG…MSSLRYNEWL (262 aa)) enclose the Protein kinase 2 domain. ATP is bound by residues 422 to 430 (LGEGSFSIC) and lysine 445. Aspartate 534 serves as the catalytic Proton acceptor. Phosphothreonine is present on residues threonine 571 and threonine 690. Residues 731-789 (AKRRKMKKTSTSTETRSSSSESSHSSSSHSHGKTTPTKTLQPTNPTDSNNPETIFQFSD) are disordered. Low complexity predominate over residues 739 to 769 (TSTSTETRSSSSESSHSSSSHSHGKTTPTKT). Serine 740, serine 742, and serine 748 each carry phosphoserine; by autocatalysis. The span at 770 to 789 (LQPTNPTDSNNPETIFQFSD) shows a compositional bias: polar residues.

It belongs to the protein kinase superfamily. AGC Ser/Thr protein kinase family. S6 kinase subfamily. Mg(2+) serves as cofactor. In terms of processing, ser-366 and Thr-571 phosphorylation is required for kinase activity. Ser-366 and Ser-202 are autophosphorylated by the C-terminal kinase domain, and their phosphorylation is essential for the catalytic activity of the N-terminal kinase domain. Phosphorylated at Ser-350, Thr-571 and Thr-690 by MAP kinases. Autophosphorylated at Ser-740, Ser-742 and Ser-748 by the N-terminal kinase domain. Widely expressed with high levels in heart, brain and placenta. Less abundant in lung, kidney and liver.

It localises to the nucleus. The catalysed reaction is L-seryl-[protein] + ATP = O-phospho-L-seryl-[protein] + ADP + H(+). It catalyses the reaction L-threonyl-[protein] + ATP = O-phospho-L-threonyl-[protein] + ADP + H(+). Its activity is regulated as follows. Activated by phosphorylation at Ser-350, Thr-571 and Thr-690 by MAP kinases, and by further autophosphorylation of Ser-202, Ser-366 and Ser-371 by the activated C-terminal kinase domain. The active N-terminal kinase domain finally phosphorylates downstream substrates, as well as Ser-740, Ser-742 and Ser-748 in its own C-terminal region. In terms of biological role, serine/threonine-protein kinase that is required for the mitogen or stress-induced phosphorylation of the transcription factors CREB1 and ATF1 and that contributes to gene activation by histone phosphorylation. Phosphorylates CREB1 and ATF1 in response to mitogenic or stress stimuli such as UV-C irradiation, epidermal growth factor (EGF) and anisomycin. Directly represses transcription via phosphorylation of 'Ser-1' of histone H2A. Phosphorylates 'Ser-10' of histone H3 in response to mitogenics, stress stimuli and EGF, which results in the transcriptional activation of several immediate early genes, including proto-oncogenes c-fos/FOS and c-jun/JUN. May also phosphorylate 'Ser-28' of histone H3. Mediates the mitogen- and stress-induced phosphorylation of high mobility group protein 1 (HMGN1/HMG14). This chain is Ribosomal protein S6 kinase alpha-5 (RPS6KA5), found in Gallus gallus (Chicken).